We begin with the raw amino-acid sequence, 537 residues long: Eukaryotic translation initiation factor 3 subunit L (537 aa).

Residues 300–512 (TFSSILLYIQ…IHIADTKVSH (213 aa)) enclose the PCI domain.

This sequence belongs to the eIF-3 subunit L family. As to quaternary structure, component of the eukaryotic translation initiation factor 3 (eIF-3) complex.

Its subcellular location is the cytoplasm. Its function is as follows. Component of the eukaryotic translation initiation factor 3 (eIF-3) complex, which is involved in protein synthesis of a specialized repertoire of mRNAs and, together with other initiation factors, stimulates binding of mRNA and methionyl-tRNAi to the 40S ribosome. The eIF-3 complex specifically targets and initiates translation of a subset of mRNAs involved in cell proliferation. The sequence is that of Eukaryotic translation initiation factor 3 subunit L from Culex quinquefasciatus (Southern house mosquito).